We begin with the raw amino-acid sequence, 304 residues long: Non-structural maintenance of chromosomes element 3 homolog (304 aa).

Disordered stretches follow at residues 1–82 (MLQK…PRSQ) and 285–304 (ALAD…APSS). Basic and acidic residues predominate over residues 32–43 (AGEDARVLRDGF). Phosphoserine is present on residues serine 57, serine 60, and serine 64. The segment covering 60 to 80 (SQGPSPQGARRAQAAPAVGPR) has biased composition (low complexity). The interaction with NSMCE1 stretch occupies residues 78-304 (GPRSQKQLEL…PQPSGPAPSS (227 aa)). Residues 85-285 (LELKVSELVQ…KDWPAQYCEA (201 aa)) form the MAGE domain.

As to quaternary structure, component of the SMC5-SMC6 complex which consists at least of SMC5, SMC6, NSMCE2, NSMCE1, NSMCE4A or EID3 and NSMCE3. NSMCE1, NSMCE4A or EID3 and NSMCE3 probably form a subcomplex that bridges the head domains of the SMC5:SMC6 heterodimer. Interacts with PJA1. Interacts with E2F1 (via C-terminus). Interacts with NGFR (via C-terminus). Interacts with NSMCE1. Interacts with NSMCE4. Interacts with SMC6. Interacts with EID3. In terms of tissue distribution, ubiquitous.

The protein localises to the cytoplasm. It is found in the nucleus. It localises to the chromosome. The protein resides in the telomere. Its function is as follows. Component of the SMC5-SMC6 complex, a complex involved in repair of DNA double-strand breaks by homologous recombination. The complex may promote sister chromatid homologous recombination by recruiting the SMC1-SMC3 cohesin complex to double-strand breaks. The complex is required for telomere maintenance via recombination in ALT (alternative lengthening of telomeres) cell lines and mediates sumoylation of shelterin complex (telosome) components which is proposed to lead to shelterin complex disassembly in ALT-associated PML bodies (APBs). In vitro enhances ubiquitin ligase activity of NSMCE1. Proposed to act through recruitment and/or stabilization of the Ubl-conjugating enzyme (E2) at the E3:substrate complex. May be a growth suppressor that facilitates the entry of the cell into cell cycle arrest. This is Non-structural maintenance of chromosomes element 3 homolog from Homo sapiens (Human).